The following is a 238-amino-acid chain: N-acetylneuraminic acid outer membrane channel protein NanC (238 aa).

Residues 1 to 23 form the signal peptide; it reads MKKAKILSGVLLLCFSSPLISQA. Topologically, residues 24 to 25 are periplasmic; sequence AT. A transmembrane span lies at residues 26–32; it reads LDVRGGY. Topologically, residues 33–39 are extracellular; that stretch reads RSGSHAY. Positions 40–49 form a transmembrane segment; the sequence is ETRLKVSEGW. Residues 50–52 are Periplasmic-facing; that stretch reads QNG. The chain crosses the lipid bilayer at residues 53 to 61; that stretch reads WWASMESNT. At 62-76 the chain is on the extracellular side; it reads WNTIHDNKKENAALN. A membrane pass occupies residues 77–86; it reads DVQVEVNYAI. Over 87-91 the chain is Periplasmic; it reads KLDDQ. The chain crosses the lipid bilayer at residues 92 to 102; sequence WTVRPGMLTHF. At 103–107 the chain is on the extracellular side; it reads SSNGT. A transmembrane span lies at residues 108-117; sequence RYGPYVKLSW. The Periplasmic portion of the chain corresponds to 118-122; sequence DATKD. The chain crosses the lipid bilayer at residues 123 to 132; the sequence is LNFGIRYRYD. Over 133–151 the chain is Extracellular; sequence WKAYRQQDLSGDMSRDNVH. Residues 152–159 are membrane-embedded; it reads RWDGYVTY. Residues 160 to 164 are Periplasmic-facing; that stretch reads HINSD. A membrane pass occupies residues 165–173; the sequence is FTFAWQTTL. The Extracellular segment spans residues 174-190; that stretch reads YSKQNDYRYANHKKWAT. Positions 191–200 form a transmembrane segment; it reads ENAFVLQYHM. At 201–203 the chain is on the periplasmic side; that stretch reads TPD. The segment at 204-212 is a transmembrane helix; sequence ITPYIEYDY. Residues 213–228 are Extracellular-facing; sequence LDRQGVYNGRDNLSEN. Positions 229–236 form a transmembrane segment; that stretch reads SYRIGVSF. The Periplasmic segment spans residues 237–238; that stretch reads KL.

It belongs to the oligogalacturonate-specific porin KdgM (TC 1.B.35) family. NanC subfamily. In terms of assembly, monomer.

It is found in the cell outer membrane. The enzyme catalyses N-acetylneuraminate(in) = N-acetylneuraminate(out). Its function is as follows. Outer membrane channel protein allowing the entry of N-acetylneuraminic acid (Neu5Ac, the most abundant sialic acid on host cell surfaces) into the bacteria. NanC proteins form high-conductance channels which are open at low membrane potentials and which have a weak anion selectivity. The protein is N-acetylneuraminic acid outer membrane channel protein NanC (nanC) of Escherichia coli O157:H7.